Reading from the N-terminus, the 117-residue chain is Small ribosomal subunit protein bS6 (117 aa).

The disordered stretch occupies residues 92–117 (KVDEHPEGPSIQMQKREERDNRRERR). The span at 105 to 117 (QKREERDNRRERR) shows a compositional bias: basic and acidic residues.

Belongs to the bacterial ribosomal protein bS6 family.

Binds together with bS18 to 16S ribosomal RNA. The polypeptide is Small ribosomal subunit protein bS6 (Dinoroseobacter shibae (strain DSM 16493 / NCIMB 14021 / DFL 12)).